Consider the following 303-residue polypeptide: uncharacterized protein (303 aa).

Transmembrane regions (helical) follow at residues 102–122 (TYLL…VMAI), 132–152 (FVLF…FLFF), 184–204 (LLYF…SLIY), and 221–241 (FILL…FLLF).

The protein resides in the membrane. This is an uncharacterized protein from Dictyostelium discoideum (Social amoeba).